A 530-amino-acid chain; its full sequence is Phosphoenolpyruvate carboxykinase (ATP) (530 aa).

Substrate-binding residues include Arg-57, Tyr-193, and Lys-199. ATP-binding positions include Lys-199, His-218, and Gly-234–Thr-242. Mn(2+) is bound by residues Lys-199 and His-218. Residue Asp-255 coordinates Mn(2+). Residues Glu-283, Arg-320, and Thr-445 each contribute to the ATP site. Arg-320 contacts substrate.

It belongs to the phosphoenolpyruvate carboxykinase (ATP) family. Requires Mn(2+) as cofactor.

It localises to the cytoplasm. It carries out the reaction oxaloacetate + ATP = phosphoenolpyruvate + ADP + CO2. Its pathway is carbohydrate biosynthesis; gluconeogenesis. Its function is as follows. Involved in the gluconeogenesis. Catalyzes the conversion of oxaloacetate (OAA) to phosphoenolpyruvate (PEP) through direct phosphoryl transfer between the nucleoside triphosphate and OAA. The sequence is that of Phosphoenolpyruvate carboxykinase (ATP) from Leptospira interrogans serogroup Icterohaemorrhagiae serovar copenhageni (strain Fiocruz L1-130).